Consider the following 397-residue polypeptide: Phosphoglycerate kinase (397 aa).

Residues 21 to 23, Arg37, 60 to 63, Arg119, and Arg152 contribute to the substrate site; these read DFN and HLGR. Residues Lys203, Gly294, Glu325, and 354–357 each bind ATP; that span reads GGDS.

Belongs to the phosphoglycerate kinase family. In terms of assembly, monomer.

The protein resides in the cytoplasm. It catalyses the reaction (2R)-3-phosphoglycerate + ATP = (2R)-3-phospho-glyceroyl phosphate + ADP. It functions in the pathway carbohydrate degradation; glycolysis; pyruvate from D-glyceraldehyde 3-phosphate: step 2/5. The chain is Phosphoglycerate kinase from Chlorobium limicola (strain DSM 245 / NBRC 103803 / 6330).